A 509-amino-acid polypeptide reads, in one-letter code: UDP-N-acetylmuramyl-tripeptide synthetase (509 aa).

Position 30 (S30) interacts with UDP-N-acetyl-alpha-D-muramoyl-L-alanyl-D-glutamate. 111–117 (GTDGKTT) is a binding site for ATP. UDP-N-acetyl-alpha-D-muramoyl-L-alanyl-D-glutamate contacts are provided by residues 155–156 (ST), T182, and R192. An N6-carboxylysine modification is found at K224.

The protein belongs to the MurCDEF family. MurE subfamily. In terms of processing, carboxylation is probably crucial for Mg(2+) binding and, consequently, for the gamma-phosphate positioning of ATP.

The protein localises to the cytoplasm. It functions in the pathway cell wall biogenesis; peptidoglycan biosynthesis. In terms of biological role, catalyzes the addition of an amino acid to the nucleotide precursor UDP-N-acetylmuramoyl-L-alanyl-D-glutamate (UMAG) in the biosynthesis of bacterial cell-wall peptidoglycan. In Roseiflexus sp. (strain RS-1), this protein is UDP-N-acetylmuramyl-tripeptide synthetase.